The primary structure comprises 509 residues: uncharacterized protein (509 aa).

Its subcellular location is the virion. This is an uncharacterized protein from Acanthamoeba polyphaga mimivirus (APMV).